Consider the following 427-residue polypeptide: MESLTLQPIARVDGTINLPGSKSVSNRALLLAALAHGKTVLTNLLDSDDVRYMLNALKALGVSYTLSADRTRCEIIGNGGPLHAKSALELFLGNAGTAMRPLAAALCLGSNDIVLTGEPRMKERPIGHLVDALRLGGAKITYLEQENYPPLRLQGGFTGGNVDVDGSVSSQFLTALLMTAPLAPEDTVIRIKGDLVSKPYIDITLNLMKTFGVEIENQHYQQFVVKGGQSYQSPGTYLVEGDASSASYFLAAAAIKGGTVKVTGIGRNSMQGDIRFADVLEKMGATICWGDDYISCTRGELNAIDMDMNHIPDAAMTIATAALFAKGNTTLRNIYNWRVKETDRLFAMATELRKVGAEVEEGHDFIRITPPEKLKFAEIATYNDHRMAMCFSLVALSDTAVTILDPKCTAKTFPDYFEQLARISQAA.

3-phosphoshikimate contacts are provided by lysine 22, serine 23, and arginine 27. Residue lysine 22 participates in phosphoenolpyruvate binding. Residues glycine 96 and arginine 124 each contribute to the phosphoenolpyruvate site. 7 residues coordinate 3-phosphoshikimate: serine 169, serine 170, glutamine 171, serine 197, aspartate 313, asparagine 336, and lysine 340. Residue glutamine 171 coordinates phosphoenolpyruvate. Residue aspartate 313 is the Proton acceptor of the active site. Arginine 344, arginine 386, and lysine 411 together coordinate phosphoenolpyruvate.

This sequence belongs to the EPSP synthase family. In terms of assembly, monomer.

Its subcellular location is the cytoplasm. The catalysed reaction is 3-phosphoshikimate + phosphoenolpyruvate = 5-O-(1-carboxyvinyl)-3-phosphoshikimate + phosphate. Its pathway is metabolic intermediate biosynthesis; chorismate biosynthesis; chorismate from D-erythrose 4-phosphate and phosphoenolpyruvate: step 6/7. Catalyzes the transfer of the enolpyruvyl moiety of phosphoenolpyruvate (PEP) to the 5-hydroxyl of shikimate-3-phosphate (S3P) to produce enolpyruvyl shikimate-3-phosphate and inorganic phosphate. This is 3-phosphoshikimate 1-carboxyvinyltransferase from Escherichia coli (strain SMS-3-5 / SECEC).